The primary structure comprises 385 residues: 5'-AMP-activated protein kinase catalytic subunit alpha-1 (385 aa).

In terms of domain architecture, Protein kinase spans 1–229 (DGRVKIGHYI…IKDIREHEWF (229 aa)). T14 bears the Phosphothreonine mark. 15 to 22 (LGVGTFGK) provides a ligand contact to ATP. D100 functions as the Proton acceptor in the catalytic mechanism. A Phosphothreonine; by LKB1 and CaMKK2 modification is found at T133. Phosphothreonine occurs at positions 219 and 276. Residues 252–297 (EALKQDPLAVAYHLIIDNRDFYLATSPPDSFLDDHHLTRVPFLVAE) are AIS. S277 carries the phosphoserine modification. S281 is subject to Phosphoserine; by ULK1. Phosphothreonine; by ULK1 is present on T289. T298 is subject to Phosphothreonine. Phosphoserine is present on residues S353 and S383.

This sequence belongs to the protein kinase superfamily. CAMK Ser/Thr protein kinase family. SNF1 subfamily. In terms of assembly, AMPK is a heterotrimer of an alpha catalytic subunit (PRKAA1 or PRKAA2), a beta (PRKAB1 or PRKAB2) and a gamma non-catalytic subunits (PRKAG1, PRKAG2 or PRKAG3). Interacts with FNIP1 and FNIP2. Mg(2+) is required as a cofactor. In terms of processing, ubiquitinated. Phosphorylated at Thr-133 by STK11/LKB1 in complex with STE20-related adapter-alpha (STRADA) pseudo kinase and CAB39. Also phosphorylated at Thr-133 by CAMKK2; triggered by a rise in intracellular calcium ions, without detectable changes in the AMP/ATP ratio. CAMKK1 can also phosphorylate Thr-133, but at a much lower level. Dephosphorylated by protein phosphatase 2A and 2C (PP2A and PP2C). Phosphorylated by ULK1 and ULK2; leading to negatively regulate AMPK activity and suggesting the existence of a regulatory feedback loop between ULK1, ULK2 and AMPK. Dephosphorylated by PPM1A and PPM1B. Post-translationally, glycosylated; O-GlcNAcylated by OGT, promoting the AMP-activated protein kinase (AMPK) activity.

Its subcellular location is the cytoplasm. It localises to the nucleus. The catalysed reaction is L-seryl-[protein] + ATP = O-phospho-L-seryl-[protein] + ADP + H(+). The enzyme catalyses L-threonyl-[protein] + ATP = O-phospho-L-threonyl-[protein] + ADP + H(+). It catalyses the reaction L-seryl-[acetyl-CoA carboxylase] + ATP = O-phospho-L-seryl-[acetyl-CoA carboxylase] + ADP + H(+). It carries out the reaction L-seryl-[3-hydroxy-3-methylglutaryl-coenzyme A reductase] + ATP = O-phospho-L-seryl-[3-hydroxy-3-methylglutaryl-coenzyme A reductase] + ADP + H(+). The catalysed reaction is L-seryl-[tau protein] + ATP = O-phospho-L-seryl-[tau protein] + ADP + H(+). The enzyme catalyses L-threonyl-[tau protein] + ATP = O-phospho-L-threonyl-[tau protein] + ADP + H(+). Activated by phosphorylation on Thr-133. Binding of AMP to non-catalytic gamma subunit (PRKAG1, PRKAG2 or PRKAG3) results in allosteric activation, inducing phosphorylation on Thr-133. AMP-binding to gamma subunit also sustains activity by preventing dephosphorylation of Thr-133. ADP also stimulates Thr-133 phosphorylation, without stimulating already phosphorylated AMPK. ATP promotes dephosphorylation of Thr-133, rendering the enzyme inactive. Under physiological conditions AMPK mainly exists in its inactive form in complex with ATP, which is much more abundant than AMP. Selectively inhibited by compound C (6-[4-(2-Piperidin-1-yl-ethoxy)-phenyl)]-3-pyridin-4-yl-pyyrazolo[1,5-a] pyrimidine. Activated by resveratrol, a natural polyphenol present in red wine, and S17834, a synthetic polyphenol. In terms of biological role, catalytic subunit of AMP-activated protein kinase (AMPK), an energy sensor protein kinase that plays a key role in regulating cellular energy metabolism. In response to reduction of intracellular ATP levels, AMPK activates energy-producing pathways and inhibits energy-consuming processes: inhibits protein, carbohydrate and lipid biosynthesis, as well as cell growth and proliferation. AMPK acts via direct phosphorylation of metabolic enzymes, and by longer-term effects via phosphorylation of transcription regulators. Regulates lipid synthesis by phosphorylating and inactivating lipid metabolic enzymes such as ACACA, ACACB, GYS1, HMGCR and LIPE; regulates fatty acid and cholesterol synthesis by phosphorylating acetyl-CoA carboxylase (ACACA and ACACB) and hormone-sensitive lipase (LIPE) enzymes, respectively. Promotes lipolysis of lipid droplets by mediating phosphorylation of isoform 1 of CHKA (CHKalpha2). Regulates insulin-signaling and glycolysis by phosphorylating IRS1, PFKFB2 and PFKFB3. AMPK stimulates glucose uptake in muscle by increasing the translocation of the glucose transporter SLC2A4/GLUT4 to the plasma membrane, possibly by mediating phosphorylation of TBC1D4/AS160. Regulates transcription and chromatin structure by phosphorylating transcription regulators involved in energy metabolism such as CRTC2/TORC2, FOXO3, histone H2B, HDAC5, MEF2C, MLXIPL/ChREBP, EP300, HNF4A, p53/TP53, SREBF1, SREBF2 and PPARGC1A. Acts as a key regulator of glucose homeostasis in liver by phosphorylating CRTC2/TORC2, leading to CRTC2/TORC2 sequestration in the cytoplasm. In response to stress, phosphorylates 'Ser-36' of histone H2B (H2BS36ph), leading to promote transcription. Acts as a key regulator of cell growth and proliferation by phosphorylating FNIP1, TSC2, RPTOR, WDR24 and ATG1/ULK1: in response to nutrient limitation, negatively regulates the mTORC1 complex by phosphorylating RPTOR component of the mTORC1 complex and by phosphorylating and activating TSC2. Also phosphorylates and inhibits GATOR2 subunit WDR24 in response to nutrient limitation, leading to suppress glucose-mediated mTORC1 activation. In response to energetic stress, phosphorylates FNIP1, inactivating the non-canonical mTORC1 signaling, thereby promoting nuclear translocation of TFEB and TFE3, and inducing transcription of lysosomal or autophagy genes. In response to nutrient limitation, promotes autophagy by phosphorylating and activating ATG1/ULK1. In that process also activates WDR45/WIPI4. Phosphorylates CASP6, thereby preventing its autoprocessing and subsequent activation. In response to nutrient limitation, phosphorylates transcription factor FOXO3 promoting FOXO3 mitochondrial import. Also acts as a regulator of cellular polarity by remodeling the actin cytoskeleton; probably by indirectly activating myosin. AMPK also acts as a regulator of circadian rhythm by mediating phosphorylation of CRY1, leading to destabilize it. May regulate the Wnt signaling pathway by phosphorylating CTNNB1, leading to stabilize it. Also has tau-protein kinase activity: in response to amyloid beta A4 protein (APP) exposure, activated by CAMKK2, leading to phosphorylation of MAPT/TAU; however the relevance of such data remains unclear in vivo. Also phosphorylates CFTR, EEF2K, KLC1, NOS3 and SLC12A1. Regulates hepatic lipogenesis. Activated via SIRT3, represses sterol regulatory element-binding protein (SREBP) transcriptional activities and ATP-consuming lipogenesis to restore cellular energy balance. Upon stress, regulates mitochondrial fragmentation through phosphorylation of MTFR1L. This chain is 5'-AMP-activated protein kinase catalytic subunit alpha-1 (PRKAA1), found in Sus scrofa (Pig).